A 168-amino-acid polypeptide reads, in one-letter code: Photosystem I assembly protein Ycf3 (168 aa).

TPR repeat units lie at residues 35–68 (AFTYYRDGMSAQSEGNYAEALQNYYEATRLEIDP), 72–105 (SYILYNIGLIHTSNGEHTKALEYYFRALERNPFL), and 120–153 (GEQAIQQGDSEIAESWFDQAAEYWKQAIALTPGN).

Belongs to the Ycf3 family.

It is found in the plastid. Its subcellular location is the chloroplast thylakoid membrane. Functionally, essential for the assembly of the photosystem I (PSI) complex. May act as a chaperone-like factor to guide the assembly of the PSI subunits. This chain is Photosystem I assembly protein Ycf3, found in Nandina domestica (Heavenly bamboo).